We begin with the raw amino-acid sequence, 64 residues long: UPF0370 protein YPA_2246 (64 aa).

Residues 3 to 23 (WLADYWWIILILLVGMILNGI) traverse the membrane as a helical segment. Residues 36-47 (DNKPELPPHRDN) show a composition bias toward basic and acidic residues. Residues 36–64 (DNKPELPPHRDNNAQWDDEDDWPDQNKKK) form a disordered region.

The protein belongs to the UPF0370 family.

The protein localises to the cell membrane. In Yersinia pestis bv. Antiqua (strain Antiqua), this protein is UPF0370 protein YPA_2246.